Consider the following 314-residue polypeptide: Small glutamine-rich tetratricopeptide repeat-containing protein alpha (314 aa).

The tract at residues 65-99 (ATASKEMPQDPRGPDRTPPSEEDSAEAERLKTEGN) is disordered. Basic and acidic residues predominate over residues 71–83 (MPQDPRGPDRTPP). The residue at position 81 (Thr81) is a Phosphothreonine. Residue Ser84 is modified to Phosphoserine. The span at 90–99 (EAERLKTEGN) shows a compositional bias: basic and acidic residues. 3 TPR repeats span residues 91–124 (AERLKTEGNEQMKLENFEAAVHLYGKAIELNPAN), 125–158 (AVYFCNRAAAYSKLGNYVGAVQDCERAIGIDPGY), and 159–192 (SKAYGRMGLALSSLNKHAEAVAYYKKALELDPDN). The residue at position 137 (Lys137) is an N6-acetyllysine. The tract at residues 249–268 (GMISGGHNPLGTPGSSPQHS) is disordered. Ser302 carries the phosphoserine modification. Thr304 carries the post-translational modification Phosphothreonine. A Phosphoserine modification is found at Ser306.

It belongs to the SGT family. As to quaternary structure, homodimer. Homooligomer. Interacts with DNAJC5 and DNAJC5B. Interacts (via TPR repeats) with HSP90AA1. Interacts (via Gln-rich region) with SLC2A1. Interacts with HSP90AB1. Interacts (via TPR repeats) with HSPA8/Hsc70; the interaction is direct. Interacts with BAG6 (via ubiquitin-like domain); interaction prevents interaction between BAG6 and RNF126. Forms a multiprotein complex, at least composed of DNAJB12, DNAJB14, HSPA8/Hsc70 and SGTA; interaction with DNAJB14 and HSPA8/Hsc70 is direct. (Microbial infection) Interacts with NS1 from parvovirus H-1. As to expression, ubiquitously expressed.

The protein resides in the cytoplasm. Its subcellular location is the nucleus. Functionally, co-chaperone that binds misfolded and hydrophobic patches-containing client proteins in the cytosol. Mediates their targeting to the endoplasmic reticulum but also regulates their sorting to the proteasome when targeting fails. Functions in tail-anchored/type II transmembrane proteins membrane insertion constituting with ASNA1 and the BAG6 complex a targeting module. Functions upstream of the BAG6 complex and ASNA1, binding more rapidly the transmembrane domain of newly synthesized proteins. It is also involved in the regulation of the endoplasmic reticulum-associated misfolded protein catabolic process via its interaction with BAG6: collaborates with the BAG6 complex to maintain hydrophobic substrates in non-ubiquitinated states. Competes with RNF126 for interaction with BAG6, preventing the ubiquitination of client proteins associated with the BAG6 complex. Binds directly to HSC70 and HSP70 and regulates their ATPase activity. In Rattus norvegicus (Rat), this protein is Small glutamine-rich tetratricopeptide repeat-containing protein alpha (Sgta).